A 143-amino-acid chain; its full sequence is Ribosome-binding factor A (143 aa).

The segment at 123–143 is disordered; it reads VRAQAAQAKPAGEANPYKERN. Low complexity predominate over residues 124–136; that stretch reads RAQAAQAKPAGEA.

This sequence belongs to the RbfA family. Monomer. Binds 30S ribosomal subunits, but not 50S ribosomal subunits or 70S ribosomes.

Its subcellular location is the cytoplasm. Functionally, one of several proteins that assist in the late maturation steps of the functional core of the 30S ribosomal subunit. Associates with free 30S ribosomal subunits (but not with 30S subunits that are part of 70S ribosomes or polysomes). Required for efficient processing of 16S rRNA. May interact with the 5'-terminal helix region of 16S rRNA. The chain is Ribosome-binding factor A from Corynebacterium urealyticum (strain ATCC 43042 / DSM 7109).